Reading from the N-terminus, the 152-residue chain is Superoxide dismutase [Cu-Zn] 1 (152 aa).

Cu cation is bound by residues His45, His47, and His62. Cys56 and Cys145 are joined by a disulfide. Zn(2+) is bound by residues His62, His70, His79, and Asp82. His119 serves as a coordination point for Cu cation.

Belongs to the Cu-Zn superoxide dismutase family. As to quaternary structure, homodimer. Cu cation serves as cofactor. It depends on Zn(2+) as a cofactor.

Its subcellular location is the cytoplasm. The catalysed reaction is 2 superoxide + 2 H(+) = H2O2 + O2. In terms of biological role, destroys radicals which are normally produced within the cells and which are toxic to biological systems. This is Superoxide dismutase [Cu-Zn] 1 (SODCC.1) from Mesembryanthemum crystallinum (Common ice plant).